Reading from the N-terminus, the 610-residue chain is Glucoamylase ARB_02327-1 (610 aa).

Positions 1–18 (MRVTSLLWSSLVIPAAVG) are cleaved as a signal peptide. Positions 19-24 (FQVRFK) are excised as a propeptide. Asparagine 49 carries N-linked (GlcNAc...) asparagine glycosylation. Substrate is bound at residue tryptophan 143. A glycan (N-linked (GlcNAc...) asparagine) is linked at asparagine 194. Catalysis depends on aspartate 199, which acts as the Proton acceptor. Glutamate 202 serves as the catalytic Proton donor. 3 disulfide bridges follow: cysteine 233/cysteine 236, cysteine 245/cysteine 472, and cysteine 285/cysteine 293. A CBM20 domain is found at 504 to 610 (TALPTKNNVR…SGAIKRDTWR (107 aa)).

The protein belongs to the glycosyl hydrolase 15 family.

The protein resides in the secreted. It carries out the reaction Hydrolysis of terminal (1-&gt;4)-linked alpha-D-glucose residues successively from non-reducing ends of the chains with release of beta-D-glucose.. The sequence is that of Glucoamylase ARB_02327-1 from Arthroderma benhamiae (strain ATCC MYA-4681 / CBS 112371) (Trichophyton mentagrophytes).